We begin with the raw amino-acid sequence, 148 residues long: Thioredoxin H8 (148 aa).

The 145-residue stretch at 1-145 folds into the Thioredoxin domain; it reads MGANVSTPDQ…LERKLNKYTQ (145 aa). Active-site nucleophile residues include C71 and C74. A disulfide bridge links C71 with C74.

It belongs to the thioredoxin family. Plant H-type subfamily.

It localises to the cytoplasm. In terms of biological role, probable thiol-disulfide oxidoreductase that may be involved in the redox regulation of a number of cytosolic enzymes. This chain is Thioredoxin H8 (TRX8), found in Arabidopsis thaliana (Mouse-ear cress).